A 299-amino-acid polypeptide reads, in one-letter code: NAD kinase (299 aa).

Asp71 (proton acceptor) is an active-site residue. NAD(+) contacts are provided by residues 71–72 (DG), 145–146 (ND), Arg173, Asp175, 186–191 (TAYSLS), Ala210, and Gln248.

This sequence belongs to the NAD kinase family. A divalent metal cation is required as a cofactor.

The protein resides in the cytoplasm. It carries out the reaction NAD(+) + ATP = ADP + NADP(+) + H(+). Functionally, involved in the regulation of the intracellular balance of NAD and NADP, and is a key enzyme in the biosynthesis of NADP. Catalyzes specifically the phosphorylation on 2'-hydroxyl of the adenosine moiety of NAD to yield NADP. This chain is NAD kinase, found in Bordetella bronchiseptica (strain ATCC BAA-588 / NCTC 13252 / RB50) (Alcaligenes bronchisepticus).